The primary structure comprises 218 residues: Ribose-5-phosphate isomerase A (218 aa).

Substrate is bound by residues 28 to 31, 81 to 84, and 94 to 97; these read SGST, DGAD, and KGKG. The active-site Proton acceptor is Glu103. Position 121 (Lys121) interacts with substrate.

It belongs to the ribose 5-phosphate isomerase family. Homodimer.

It catalyses the reaction aldehydo-D-ribose 5-phosphate = D-ribulose 5-phosphate. The protein operates within carbohydrate degradation; pentose phosphate pathway; D-ribose 5-phosphate from D-ribulose 5-phosphate (non-oxidative stage): step 1/1. Catalyzes the reversible conversion of ribose-5-phosphate to ribulose 5-phosphate. This chain is Ribose-5-phosphate isomerase A, found in Wigglesworthia glossinidia brevipalpis.